Reading from the N-terminus, the 418-residue chain is Gamma-glutamyl phosphate reductase (418 aa).

Belongs to the gamma-glutamyl phosphate reductase family.

It localises to the cytoplasm. The enzyme catalyses L-glutamate 5-semialdehyde + phosphate + NADP(+) = L-glutamyl 5-phosphate + NADPH + H(+). Its pathway is amino-acid biosynthesis; L-proline biosynthesis; L-glutamate 5-semialdehyde from L-glutamate: step 2/2. Functionally, catalyzes the NADPH-dependent reduction of L-glutamate 5-phosphate into L-glutamate 5-semialdehyde and phosphate. The product spontaneously undergoes cyclization to form 1-pyrroline-5-carboxylate. This is Gamma-glutamyl phosphate reductase from Lacticaseibacillus paracasei (strain ATCC 334 / BCRC 17002 / CCUG 31169 / CIP 107868 / KCTC 3260 / NRRL B-441) (Lactobacillus paracasei).